The following is a 77-amino-acid chain: uncharacterized protein (77 aa).

The next 2 helical transmembrane spans lie at 22-42 (VFANGIILITAYYLVFELPVG) and 44-64 (LIGLYIIMFVVWLLVSMFFLG).

The protein localises to the cell membrane. This is an uncharacterized protein from Methanocaldococcus jannaschii (strain ATCC 43067 / DSM 2661 / JAL-1 / JCM 10045 / NBRC 100440) (Methanococcus jannaschii).